Consider the following 205-residue polypeptide: Tumor suppressor candidate gene 1 protein homolog (205 aa).

Over residues M1–G12 the composition is skewed to low complexity. The tract at residues M1–G49 is disordered. The segment covering S13–G23 has biased composition (gly residues). The span at E24–E33 shows a compositional bias: basic and acidic residues. Residues G34–G48 are compositionally biased toward gly residues. Residues L66 to L110 are a coiled coil. 2 disordered regions span residues D113–A149 and G174–L205. The residue at position 146 (S146) is a Phosphoserine. The segment covering H196–L205 has biased composition (basic and acidic residues).

This is Tumor suppressor candidate gene 1 protein homolog (Tusc1) from Mus musculus (Mouse).